The chain runs to 257 residues: Lysine-rich coiled-coil protein 1 (257 aa).

The interval 145 to 257 (NTSAHQASYK…MLWDQSILGF (113 aa)) is disordered. Residues 152–162 (SYKHIHQKRKR) are compositionally biased toward basic residues. Basic and acidic residues-rich tracts occupy residues 163-176 (HTEE…EERP), 183-193 (ACEEIDLDKYK), 200-212 (TEAE…TEKL), and 219-228 (RSRDVASKKE). Residues 210 to 248 (EKLKNRKEKRSRDVASKKEERKRRKEKKEQGQERTEEEM) are a coiled coil.

The protein is Lysine-rich coiled-coil protein 1 (KRCC1) of Bos taurus (Bovine).